A 114-amino-acid chain; its full sequence is Ribonuclease P protein component (114 aa).

Belongs to the RnpA family. As to quaternary structure, consists of a catalytic RNA component (M1 or rnpB) and a protein subunit.

It catalyses the reaction Endonucleolytic cleavage of RNA, removing 5'-extranucleotides from tRNA precursor.. RNaseP catalyzes the removal of the 5'-leader sequence from pre-tRNA to produce the mature 5'-terminus. It can also cleave other RNA substrates such as 4.5S RNA. The protein component plays an auxiliary but essential role in vivo by binding to the 5'-leader sequence and broadening the substrate specificity of the ribozyme. This chain is Ribonuclease P protein component, found in Lactiplantibacillus plantarum (strain ATCC BAA-793 / NCIMB 8826 / WCFS1) (Lactobacillus plantarum).